Consider the following 451-residue polypeptide: DNA double-strand break repair nuclease NurA (451 aa).

Mn(2+) is bound by residues Asp-51 and Asp-126.

Belongs to the NurA family. In terms of assembly, homodimer. Interacts with HerA. Mn(2+) serves as cofactor.

With respect to regulation, exonuclease activity is stimulated in the presence of HerA. Functionally, involved in DNA double-strand break (DSB) repair. Probably acts with HerA to stimulate resection of the 5' strand and produce the long 3' single-strand that is required for RadA loading. Exhibits 5' endonuclease activity and both 5' and 3' exonuclease activities. The polypeptide is DNA double-strand break repair nuclease NurA (Pyrococcus furiosus (strain ATCC 43587 / DSM 3638 / JCM 8422 / Vc1)).